The primary structure comprises 374 residues: Putative 12-oxophytodienoate reductase 5 (374 aa).

FMN contacts are provided by residues 30–32 (PMT), alanine 63, and glutamine 105. 177–180 (HGAN) serves as a coordination point for substrate. The active-site Proton donor is the tyrosine 182. Arginine 229 lines the FMN pocket. Arginine 270 is a binding site for substrate. FMN is bound by residues glycine 300 and 321 to 322 (GR).

The protein belongs to the NADH:flavin oxidoreductase/NADH oxidase family. Requires FMN as cofactor.

Its function is as follows. Putative oxophytodienoate reductase that may be involved in the biosynthesis or metabolism of oxylipin signaling molecules. The protein is Putative 12-oxophytodienoate reductase 5 (OPR5) of Oryza sativa subsp. japonica (Rice).